The following is a 263-amino-acid chain: Mediator of RNA polymerase II transcription subunit 4 (263 aa).

Positions 61-111 (LQLAAEQAGIEKNMDALREQVRKQDEEINQLQRQLKEAEQILATSIFQARQ) form a coiled coil. 2 disordered regions span residues 209–228 (APNQFAWHPSGELHMSMGAG) and 235–263 (DTRAHKDASQDDVEVMSTESSSSSSSDSQ). Residues 251–263 (STESSSSSSSDSQ) show a composition bias toward low complexity.

It belongs to the Mediator complex subunit 4 family. As to quaternary structure, component of the Mediator complex.

Its subcellular location is the nucleus. Its function is as follows. Component of the Mediator complex, a coactivator involved in the regulated transcription of nearly all RNA polymerase II-dependent genes. Mediator functions as a bridge to convey information from gene-specific regulatory proteins to the basal RNA polymerase II transcription machinery. Mediator is recruited to promoters by direct interactions with regulatory proteins and serves as a scaffold for the assembly of a functional preinitiation complex with RNA polymerase II and the general transcription factors. The polypeptide is Mediator of RNA polymerase II transcription subunit 4 (MED4) (Anopheles gambiae (African malaria mosquito)).